The sequence spans 474 residues: ATP synthase subunit beta 2 (474 aa).

151–158 (GGAGVGKT) provides a ligand contact to ATP.

This sequence belongs to the ATPase alpha/beta chains family. In terms of assembly, F-type ATPases have 2 components, CF(1) - the catalytic core - and CF(0) - the membrane proton channel. CF(1) has five subunits: alpha(3), beta(3), gamma(1), delta(1), epsilon(1). CF(0) has four main subunits: a(1), b(1), b'(1) and c(9-12).

Its subcellular location is the cell inner membrane. It catalyses the reaction ATP + H2O + 4 H(+)(in) = ADP + phosphate + 5 H(+)(out). In terms of biological role, produces ATP from ADP in the presence of a proton gradient across the membrane. The catalytic sites are hosted primarily by the beta subunits. The protein is ATP synthase subunit beta 2 of Dinoroseobacter shibae (strain DSM 16493 / NCIMB 14021 / DFL 12).